The chain runs to 217 residues: Probable nicotinate-nucleotide adenylyltransferase (217 aa).

Belongs to the NadD family.

It catalyses the reaction nicotinate beta-D-ribonucleotide + ATP + H(+) = deamido-NAD(+) + diphosphate. It participates in cofactor biosynthesis; NAD(+) biosynthesis; deamido-NAD(+) from nicotinate D-ribonucleotide: step 1/1. In terms of biological role, catalyzes the reversible adenylation of nicotinate mononucleotide (NaMN) to nicotinic acid adenine dinucleotide (NaAD). The polypeptide is Probable nicotinate-nucleotide adenylyltransferase (Dechloromonas aromatica (strain RCB)).